Here is a 207-residue protein sequence, read N- to C-terminus: Probable molybdenum cofactor guanylyltransferase (207 aa).

GTP is bound by residues 9–11 (LAG), Lys21, and Asp97. Residue Asp97 participates in Mg(2+) binding.

It belongs to the MobA family. The cofactor is Mg(2+).

The protein localises to the cytoplasm. The enzyme catalyses Mo-molybdopterin + GTP + H(+) = Mo-molybdopterin guanine dinucleotide + diphosphate. Transfers a GMP moiety from GTP to Mo-molybdopterin (Mo-MPT) cofactor (Moco or molybdenum cofactor) to form Mo-molybdopterin guanine dinucleotide (Mo-MGD) cofactor. In Nostoc sp. (strain PCC 7120 / SAG 25.82 / UTEX 2576), this protein is Probable molybdenum cofactor guanylyltransferase.